We begin with the raw amino-acid sequence, 339 residues long: Ubiquitin carboxyl-terminal hydrolase 50 (339 aa).

The region spanning 44-339 (TGLWNLGNTC…AFCKNSVTQA (296 aa)) is the USP domain. The active-site Nucleophile is the C53. H327 acts as the Proton acceptor in catalysis.

It belongs to the peptidase C19 family. As to expression, weakly expressed in a few tissues.

The protein resides in the cytoplasm. It localises to the cytoskeleton. The protein localises to the microtubule organizing center. It is found in the centrosome. Its subcellular location is the nucleus. The catalysed reaction is Thiol-dependent hydrolysis of ester, thioester, amide, peptide and isopeptide bonds formed by the C-terminal Gly of ubiquitin (a 76-residue protein attached to proteins as an intracellular targeting signal).. Functionally, deubiquitinating enzyme that removes conjugated ubiquitin from specific proteins to regulate different cellular processes. Regulates the inflammasome signaling pathway by deubiquitinating 'Lys-63'-linked polyubiquitination of the PYCARD/ASC adapter protein. Regulates the ubiquitination and stability of the ACE2 protein. Acts as a negative regulator of the G2/M checkpoint pathway, by preventing serine/threonine kinase WEE1 degradation, thereby repressing entry into mitosis following activation of the G2/M DNA damage checkpoint. In Homo sapiens (Human), this protein is Ubiquitin carboxyl-terminal hydrolase 50.